Consider the following 1004-residue polypeptide: 2-oxoglutarate dehydrogenase E1 component (1004 aa).

Belongs to the alpha-ketoglutarate dehydrogenase family. As to quaternary structure, homodimer. Part of the 2-oxoglutarate dehydrogenase (OGDH) complex composed of E1 (2-oxoglutarate dehydrogenase), E2 (dihydrolipoamide succinyltransferase) and E3 (dihydrolipoamide dehydrogenase); the complex contains multiple copies of the three enzymatic components (E1, E2 and E3). The cofactor is thiamine diphosphate.

The enzyme catalyses N(6)-[(R)-lipoyl]-L-lysyl-[protein] + 2-oxoglutarate + H(+) = N(6)-[(R)-S(8)-succinyldihydrolipoyl]-L-lysyl-[protein] + CO2. In terms of biological role, E1 component of the 2-oxoglutarate dehydrogenase (OGDH) complex which catalyzes the decarboxylation of 2-oxoglutarate, the first step in the conversion of 2-oxoglutarate to succinyl-CoA and CO(2). This chain is 2-oxoglutarate dehydrogenase E1 component, found in Brucella suis biovar 1 (strain 1330).